The following is a 475-amino-acid chain: MNLETIIGLEVHVELKTNSKIFSASPTEFGAEPNTQTSVIDLGYPGVLPTLNKEAVNFAMKAAMALNCEIATETKFDRKNYFYPDNPKAYQISQFDKPIGENGWIEIEVDGKKKRIGITRLHLEEDAGKSTHTADGSLVDYNRQGMPLIEIVSEPDMRTPEEAYAYLEKLKSIIQYTGVSDCKMEEGSLRCDANISLRPVGQEKFGTKAELKNLNSFTYVQKGLEHEQVRQEKELLSGGIIQQETRRYDEATKKTILMRVKEGSDDYRYFPEPDLVELYIDDEWKEAVRASIPELPDARKARYVAELGLPAYDAHVLTLTKEMSDFFEATVADGADAKLTSNWLMGEVLAYLNKQQKELKDVALTPAGLSKMVQLIEKGTISSKIAKKVFNELIEKGGDPEEIVKAKGLVQISDEGTLRKVVTEILDNNEQSIEDFKNGKDRAIGFLVGQIMKATKGQANPPLVNKILLEEINKR.

The protein belongs to the GatB/GatE family. GatB subfamily. In terms of assembly, heterotrimer of A, B and C subunits.

It catalyses the reaction L-glutamyl-tRNA(Gln) + L-glutamine + ATP + H2O = L-glutaminyl-tRNA(Gln) + L-glutamate + ADP + phosphate + H(+). The catalysed reaction is L-aspartyl-tRNA(Asn) + L-glutamine + ATP + H2O = L-asparaginyl-tRNA(Asn) + L-glutamate + ADP + phosphate + 2 H(+). Its function is as follows. Allows the formation of correctly charged Asn-tRNA(Asn) or Gln-tRNA(Gln) through the transamidation of misacylated Asp-tRNA(Asn) or Glu-tRNA(Gln) in organisms which lack either or both of asparaginyl-tRNA or glutaminyl-tRNA synthetases. The reaction takes place in the presence of glutamine and ATP through an activated phospho-Asp-tRNA(Asn) or phospho-Glu-tRNA(Gln). In Bacillus cereus (strain ZK / E33L), this protein is Aspartyl/glutamyl-tRNA(Asn/Gln) amidotransferase subunit B.